The primary structure comprises 311 residues: Tryptophan 2,3-dioxygenase (311 aa).

The segment at 1–37 (MQPPGGDAPAGCPFSGARAAQPAQAAHEAPHVPGEAD) is disordered. Positions 17–27 (ARAAQPAQAAH) are enriched in low complexity. Residues 80–84 (FIIQH), tyrosine 142, and arginine 146 each bind substrate. Histidine 269 contributes to the heme binding site. Threonine 283 lines the substrate pocket.

Belongs to the tryptophan 2,3-dioxygenase family. Homotetramer. It depends on heme as a cofactor.

It catalyses the reaction L-tryptophan + O2 = N-formyl-L-kynurenine. It participates in amino-acid degradation; L-tryptophan degradation via kynurenine pathway; L-kynurenine from L-tryptophan: step 1/2. Functionally, heme-dependent dioxygenase that catalyzes the oxidative cleavage of the L-tryptophan (L-Trp) pyrrole ring and converts L-tryptophan to N-formyl-L-kynurenine. Catalyzes the oxidative cleavage of the indole moiety. The polypeptide is Tryptophan 2,3-dioxygenase (Burkholderia orbicola (strain MC0-3)).